Consider the following 63-residue polypeptide: uncharacterized protein (63 aa).

This is an uncharacterized protein from Azospirillum brasilense.